The chain runs to 134 residues: Large ribosomal subunit protein eL32 (134 aa).

It belongs to the eukaryotic ribosomal protein eL32 family.

This chain is Large ribosomal subunit protein eL32 (RpL32), found in Drosophila acanthoptera (Fruit fly).